A 367-amino-acid chain; its full sequence is Probable butyrate kinase (367 aa).

The protein belongs to the acetokinase family.

It localises to the cytoplasm. It carries out the reaction butanoate + ATP = butanoyl phosphate + ADP. The polypeptide is Probable butyrate kinase (Bacillus cereus (strain Q1)).